A 193-amino-acid polypeptide reads, in one-letter code: Oligoribonuclease (193 aa).

Residues 8 to 171 (LVWLDLEMTG…EDIRESVAEL (164 aa)) enclose the Exonuclease domain. Residue tyrosine 129 is part of the active site.

It belongs to the oligoribonuclease family.

The protein localises to the cytoplasm. In terms of biological role, 3'-to-5' exoribonuclease specific for small oligoribonucleotides. This is Oligoribonuclease from Alkalilimnicola ehrlichii (strain ATCC BAA-1101 / DSM 17681 / MLHE-1).